The sequence spans 56 residues: Small ribosomal subunit protein uS14 (56 aa).

Positions 21, 24, 39, and 42 each coordinate Zn(2+).

This sequence belongs to the universal ribosomal protein uS14 family. Component of the 40S small ribosomal subunit. Zn(2+) is required as a cofactor.

The protein resides in the cytoplasm. Its subcellular location is the cytosol. It is found in the rough endoplasmic reticulum. This chain is Small ribosomal subunit protein uS14 (RpS29), found in Scarabaeus laticollis (Scarab dung beetle).